The following is a 466-amino-acid chain: Heat stress transcription factor A-5 (466 aa).

The DNA-binding element occupies 21–115 (PAPFLVKTYE…LLKNIHRRKP (95 aa)). Residues 125 to 191 (SSTDQERAVL…KLLNFLETAI (67 aa)) form a hydrophobic repeat HR-A/B region. The Bipartite nuclear localization signal signature appears at 198–217 (KNFGKKVEQLDISAYNKKRR). Disordered stretches follow at residues 215-248 (KRRL…GNIF), 272-300 (HSIQ…LTKR), and 422-466 (TERP…QLTL). Residues 218 to 233 (LPEVEQSKPPSEDSHL) show a composition bias toward basic and acidic residues. Positions 414 to 423 (DVFWEQFLTE) match the AHA motif. 2 stretches are compositionally biased toward polar residues: residues 425–438 (PGSS…STYR) and 455–466 (LRNTKNIEQLTL). A Nuclear export signal motif is present at residues 461-466 (IEQLTL).

The protein belongs to the HSF family. Class A subfamily. Homotrimer. Exhibits temperature-dependent phosphorylation.

It localises to the cytoplasm. The protein resides in the nucleus. Transcriptional activator that specifically binds DNA sequence 5'-AGAAnnTTCT-3' known as heat shock promoter elements (HSE). The polypeptide is Heat stress transcription factor A-5 (HSFA5) (Arabidopsis thaliana (Mouse-ear cress)).